Consider the following 210-residue polypeptide: V-type sodium ATPase subunit D (210 aa).

It belongs to the V-ATPase D subunit family.

In terms of biological role, involved in ATP-driven sodium extrusion. The sequence is that of V-type sodium ATPase subunit D (ntpD) from Enterococcus hirae (strain ATCC 9790 / DSM 20160 / JCM 8729 / LMG 6399 / NBRC 3181 / NCIMB 6459 / NCDO 1258 / NCTC 12367 / WDCM 00089 / R).